Reading from the N-terminus, the 352-residue chain is DNA polymerase IV (352 aa).

Residues 6–187 (IIHIDADCFY…VPVKFISGIG (182 aa)) enclose the UmuC domain. Residues Asp-10 and Asp-105 each contribute to the Mg(2+) site. Residue Glu-106 is part of the active site.

The protein belongs to the DNA polymerase type-Y family. As to quaternary structure, monomer. The cofactor is Mg(2+).

The protein localises to the cytoplasm. The catalysed reaction is DNA(n) + a 2'-deoxyribonucleoside 5'-triphosphate = DNA(n+1) + diphosphate. Poorly processive, error-prone DNA polymerase involved in untargeted mutagenesis. Copies undamaged DNA at stalled replication forks, which arise in vivo from mismatched or misaligned primer ends. These misaligned primers can be extended by PolIV. Exhibits no 3'-5' exonuclease (proofreading) activity. May be involved in translesional synthesis, in conjunction with the beta clamp from PolIII. The polypeptide is DNA polymerase IV (Marinomonas sp. (strain MWYL1)).